The following is a 271-amino-acid chain: Phosphoribosylformylglycinamidine synthase subunit PurQ (271 aa).

Residues Lys-7 to Gly-253 form the Glutamine amidotransferase type-1 domain. Cys-104 acts as the Nucleophile in catalysis. Active-site residues include His-238 and Glu-240.

In terms of assembly, part of the FGAM synthase complex composed of 1 PurL, 1 PurQ and 2 PurS subunits.

The protein localises to the cytoplasm. The catalysed reaction is N(2)-formyl-N(1)-(5-phospho-beta-D-ribosyl)glycinamide + L-glutamine + ATP + H2O = 2-formamido-N(1)-(5-O-phospho-beta-D-ribosyl)acetamidine + L-glutamate + ADP + phosphate + H(+). It carries out the reaction L-glutamine + H2O = L-glutamate + NH4(+). It functions in the pathway purine metabolism; IMP biosynthesis via de novo pathway; 5-amino-1-(5-phospho-D-ribosyl)imidazole from N(2)-formyl-N(1)-(5-phospho-D-ribosyl)glycinamide: step 1/2. Part of the phosphoribosylformylglycinamidine synthase complex involved in the purines biosynthetic pathway. Catalyzes the ATP-dependent conversion of formylglycinamide ribonucleotide (FGAR) and glutamine to yield formylglycinamidine ribonucleotide (FGAM) and glutamate. The FGAM synthase complex is composed of three subunits. PurQ produces an ammonia molecule by converting glutamine to glutamate. PurL transfers the ammonia molecule to FGAR to form FGAM in an ATP-dependent manner. PurS interacts with PurQ and PurL and is thought to assist in the transfer of the ammonia molecule from PurQ to PurL. The polypeptide is Phosphoribosylformylglycinamidine synthase subunit PurQ (Archaeoglobus fulgidus (strain ATCC 49558 / DSM 4304 / JCM 9628 / NBRC 100126 / VC-16)).